The chain runs to 185 residues: Elongation factor P (185 aa).

Belongs to the elongation factor P family.

It is found in the cytoplasm. The protein operates within protein biosynthesis; polypeptide chain elongation. Functionally, involved in peptide bond synthesis. Stimulates efficient translation and peptide-bond synthesis on native or reconstituted 70S ribosomes in vitro. Probably functions indirectly by altering the affinity of the ribosome for aminoacyl-tRNA, thus increasing their reactivity as acceptors for peptidyl transferase. In Staphylococcus carnosus (strain TM300), this protein is Elongation factor P.